The chain runs to 433 residues: Ornithine decarboxylase, chloroplastic (433 aa).

An N6-(pyridoxal phosphate)lysine modification is found at K96. Pyridoxal 5'-phosphate-binding positions include S228, G266, and 299–302; that span reads EPGR. Position 342-343 (342-343) interacts with substrate; sequence YD. C378 functions as the Proton donor; shared with dimeric partner in the catalytic mechanism. Substrate is bound at residue D379. A pyridoxal 5'-phosphate-binding site is contributed by Y407.

The protein belongs to the Orn/Lys/Arg decarboxylase class-II family. As to quaternary structure, homodimer. Only the dimer is catalytically active, as the active sites are constructed of residues from both monomers. Pyridoxal 5'-phosphate serves as cofactor.

The protein localises to the plastid. It localises to the chloroplast. The enzyme catalyses L-ornithine + H(+) = putrescine + CO2. The protein operates within alkaloid biosynthesis; nicotine biosynthesis. It participates in amine and polyamine biosynthesis; putrescine biosynthesis via L-ornithine pathway; putrescine from L-ornithine: step 1/1. In terms of biological role, involved in the biosynthesis of pyridine alkaloid natural products, leading mainly to the production of anabasine, anatabine, nicotine and nornicotine, effective deterrents against herbivores with antiparasitic and pesticide properties (neurotoxins); nornicotine serves as the precursor in the synthesis of the carcinogen compound N'-nitrosonornicotine (NNN). Catalyzes the first and rate-limiting step of polyamine biosynthesis that converts ornithine into putrescine, which is the precursor for the polyamines, spermidine and spermine. Polyamines are essential for cell proliferation and are implicated in cellular processes, ranging from DNA replication to apoptosis. In Nicotiana glauca (Glaucous tobacco), this protein is Ornithine decarboxylase, chloroplastic.